The primary structure comprises 265 residues: Chorismate mutase 2 (265 aa).

Positions G10–D265 constitute a Chorismate mutase domain.

Homodimer. Expressed in roots, stems, cauline leaves and flowers, and at lower levels in rosette leaves and siliques.

It localises to the cytoplasm. Its subcellular location is the cytosol. It catalyses the reaction chorismate = prephenate. The protein operates within metabolic intermediate biosynthesis; prephenate biosynthesis; prephenate from chorismate: step 1/1. No allosteric regulation. This Arabidopsis thaliana (Mouse-ear cress) protein is Chorismate mutase 2.